Here is a 360-residue protein sequence, read N- to C-terminus: Phosphoserine aminotransferase (360 aa).

Arg42 is an L-glutamate binding site. Pyridoxal 5'-phosphate-binding positions include 76–77 (AR), Trp102, Thr152, Asp172, and Gln195. The residue at position 196 (Lys196) is an N6-(pyridoxal phosphate)lysine. A pyridoxal 5'-phosphate-binding site is contributed by 237–238 (NT).

This sequence belongs to the class-V pyridoxal-phosphate-dependent aminotransferase family. SerC subfamily. In terms of assembly, homodimer. Pyridoxal 5'-phosphate serves as cofactor.

The protein localises to the cytoplasm. It carries out the reaction O-phospho-L-serine + 2-oxoglutarate = 3-phosphooxypyruvate + L-glutamate. The catalysed reaction is 4-(phosphooxy)-L-threonine + 2-oxoglutarate = (R)-3-hydroxy-2-oxo-4-phosphooxybutanoate + L-glutamate. It functions in the pathway amino-acid biosynthesis; L-serine biosynthesis; L-serine from 3-phospho-D-glycerate: step 2/3. The protein operates within cofactor biosynthesis; pyridoxine 5'-phosphate biosynthesis; pyridoxine 5'-phosphate from D-erythrose 4-phosphate: step 3/5. Its function is as follows. Catalyzes the reversible conversion of 3-phosphohydroxypyruvate to phosphoserine and of 3-hydroxy-2-oxo-4-phosphonooxybutanoate to phosphohydroxythreonine. The polypeptide is Phosphoserine aminotransferase (Pasteurella multocida (strain Pm70)).